Here is a 628-residue protein sequence, read N- to C-terminus: Growth hormone receptor (628 aa).

A signal peptide spans 1 to 18 (MDLWQLLLTLAVVGSSNA). Residues 19 to 266 (FVGREAVTVT…FTCEEEFQFP (248 aa)) lie on the Extracellular side of the membrane. N-linked (GlcNAc...) asparagine glycans are attached at residues N33, N40, and N46. 2 disulfide bridges follow: C56–C66 and C101–C112. An N-linked (GlcNAc...) asparagine glycan is attached at N115. Residues C126 and C140 are joined by a disulfide bond. Positions 151–254 (PPTGLNWTLM…EILYITLPQS (104 aa)) constitute a Fibronectin type-III domain. 3 N-linked (GlcNAc...) asparagine glycosylation sites follow: N156, N161, and N200. The short motif at 240–244 (YGEFS) is the WSXWS motif element. The chain crosses the membrane as a helical span at residues 267-287 (WFLIMIFGIFGLTVMLLVVMF). The Cytoplasmic portion of the chain corresponds to 288–628 (SKQQRIKMLI…STDQLNKIML (341 aa)). Residues 294 to 379 (KMLILPPVPV…HQKSLNILGA (86 aa)) are required for JAK2 binding. The Box 1 motif signature appears at 297–305 (ILPPVPVPK). The UbE motif motif lies at 340–349 (DSWVEFIELD). S341 carries the post-translational modification Phosphoserine. Y483 and Y585 each carry phosphotyrosine.

This sequence belongs to the type I cytokine receptor family. Type 1 subfamily. In terms of assembly, on growth hormone (GH) binding, forms homodimers and binds JAK2 via a box 1-containing domain. In terms of processing, the soluble form (GHBP) is produced by phorbol ester-promoted proteolytic cleavage at the cell surface (shedding) by ADAM17/TACE. Shedding is inhibited by growth hormone (GH) binding to the receptor probably due to a conformational change in GHR rendering the receptor inaccessible to ADAM17. On GH binding, phosphorylated on tyrosine residues in the cytoplasmic domain by JAK2. Post-translationally, ubiquitinated by the ECS(SOCS2) complex following ligand-binding and phosphorylation by JAK2, leading to its degradation by the proteasome. Regulation by the ECS(SOCS2) complex acts as a negative feedback loop of growth hormone receptor signaling. Ubiquitination is not sufficient for GHR internalization.

The protein localises to the cell membrane. Its subcellular location is the secreted. In terms of biological role, receptor for pituitary gland growth hormone (GH1) involved in regulating postnatal body growth. On ligand binding, couples to the JAK2/STAT5 pathway. Functionally, the soluble form (GHBP) acts as a reservoir of growth hormone in plasma and may be a modulator/inhibitor of GH signaling. This chain is Growth hormone receptor (GHR), found in Cavia porcellus (Guinea pig).